A 313-amino-acid polypeptide reads, in one-letter code: uncharacterized protein (313 aa).

This sequence to M.jannaschii MJ0977 C-terminal region.

This is an uncharacterized protein from Methanocaldococcus jannaschii (strain ATCC 43067 / DSM 2661 / JAL-1 / JCM 10045 / NBRC 100440) (Methanococcus jannaschii).